Here is a 349-residue protein sequence, read N- to C-terminus: tRNA pseudouridine synthase D (349 aa).

A substrate-binding site is contributed by Phe-27. Asp-80 serves as the catalytic Nucleophile. Asn-129 serves as a coordination point for substrate. A TRUD domain is found at 155 to 303; that stretch reads GVPNYFGAQR…VEAARRAMLL (149 aa). Phe-329 provides a ligand contact to substrate.

Belongs to the pseudouridine synthase TruD family.

The catalysed reaction is uridine(13) in tRNA = pseudouridine(13) in tRNA. In terms of biological role, responsible for synthesis of pseudouridine from uracil-13 in transfer RNAs. This Escherichia coli O7:K1 (strain IAI39 / ExPEC) protein is tRNA pseudouridine synthase D.